The following is a 208-amino-acid chain: RNA-binding protein KhpB (208 aa).

Residues 5–55 (TAAGRNVDEAVQSGLQELGLTKDKVEITVIEEGNKGFLGIFGKKPAIVKLV) form a jag_N domain region. The KH domain occupies 58–135 (IDPIQQAKLY…GQYKNVTVDA (78 aa)). The region spanning 140-208 (LKRKETLSQL…NRHLVISHKR (69 aa)) is the R3H domain.

Belongs to the KhpB RNA-binding protein family. As to quaternary structure, forms a complex with KhpA.

The protein resides in the cytoplasm. In terms of biological role, a probable RNA chaperone. Forms a complex with KhpA which binds to cellular RNA and controls its expression. Plays a role in peptidoglycan (PG) homeostasis and cell length regulation. This Bacillus subtilis (strain 168) protein is RNA-binding protein KhpB.